An 810-amino-acid chain; its full sequence is Plasminogen (810 aa).

Positions 1 to 19 (MEHKEVVLLLLLFLKSGQG) are cleaved as a signal peptide. The region spanning 20–98 (EPLDDYVNTQ…RDVVLFEKKV (79 aa)) is the PAN domain. Intrachain disulfides connect cysteine 49–cysteine 73, cysteine 53–cysteine 61, cysteine 103–cysteine 181, cysteine 124–cysteine 164, cysteine 152–cysteine 176, cysteine 185–cysteine 262, cysteine 188–cysteine 316, cysteine 206–cysteine 245, cysteine 234–cysteine 257, cysteine 275–cysteine 352, cysteine 296–cysteine 335, and cysteine 324–cysteine 347. 3 consecutive Kringle domains span residues 103–181 (CKTG…IPEC), 184–262 (ACMH…IPRC), and 275–352 (CLKG…IPSC). The segment at 126–145 (KWSSTSPHRPRFSPATHPSE) is disordered. L-lysine contacts are provided by arginine 136, aspartate 158, and arginine 172. O-linked (GalNAc...) threonine glycosylation is present at threonine 365. 9 cysteine pairs are disulfide-bonded: cysteine 377–cysteine 454, cysteine 398–cysteine 437, cysteine 426–cysteine 449, cysteine 481–cysteine 560, cysteine 502–cysteine 543, cysteine 531–cysteine 555, cysteine 567–cysteine 685, cysteine 577–cysteine 585, and cysteine 607–cysteine 623. Kringle domains lie at 377–454 (CYHG…LKKC) and 481–560 (CMFG…VPQC). Positions 432 and 445 each coordinate L-lysine. The 228-residue stretch at 581 to 808 (VVGGCVANAH…FVTWIEGVMR (228 aa)) folds into the Peptidase S1 domain. Serine 597 bears the Phosphoserine mark. Active-site charge relay system residues include histidine 622 and aspartate 665. A Phosphoserine modification is found at serine 688. 3 disulfides stabilise this stretch: cysteine 699/cysteine 766, cysteine 729/cysteine 745, and cysteine 756/cysteine 784. The Charge relay system role is filled by serine 760.

It belongs to the peptidase S1 family. Plasminogen subfamily. As to quaternary structure, interacts with CSPG4 and AMOT. Interacts (via the Kringle domains) with HRG; the interaction tethers PLG to the cell surface and enhances its activation. Interacts (via Kringle 4 domain) with ADA; the interaction stimulates PLG activation when in complex with DPP4. Angiostatin: Interacts with ATP5F1A; the interaction inhibits most of the angiogenic effects of angiostatin. In terms of processing, in the presence of the inhibitor, the activation involves only cleavage after Arg-580, yielding two chains held together by two disulfide bonds. In the absence of the inhibitor, the activation involves additionally the removal of the activation peptide.

It is found in the secreted. It catalyses the reaction Preferential cleavage: Lys-|-Xaa &gt; Arg-|-Xaa, higher selectivity than trypsin. Converts fibrin into soluble products.. Converted into plasmin by plasminogen activators, both plasminogen and its activator being bound to fibrin. Activated with catalytic amounts of streptokinase. In terms of biological role, plasmin dissolves the fibrin of blood clots and acts as a proteolytic factor in a variety of other processes including embryonic development, tissue remodeling, tumor invasion, and inflammation. In ovulation, weakens the walls of the Graafian follicle. It activates the urokinase-type plasminogen activator, collagenases and several complement zymogens, such as C1, C4 and C5. Cleavage of fibronectin and laminin leads to cell detachment and apoptosis. Also cleaves fibrin, thrombospondin and von Willebrand factor. Its role in tissue remodeling and tumor invasion may be modulated by CSPG4. Binds to cells. The protein is Plasminogen (PLG) of Pongo abelii (Sumatran orangutan).